Here is a 287-residue protein sequence, read N- to C-terminus: Pyridoxal kinase PdxY (287 aa).

Substrate contacts are provided by residues S9 and M44–Q45. D111, A142, E147, and K180 together coordinate ATP. D221 lines the substrate pocket.

Belongs to the pyridoxine kinase family. PdxY subfamily. As to quaternary structure, homodimer. Mg(2+) is required as a cofactor.

It catalyses the reaction pyridoxal + ATP = pyridoxal 5'-phosphate + ADP + H(+). It functions in the pathway cofactor metabolism; pyridoxal 5'-phosphate salvage; pyridoxal 5'-phosphate from pyridoxal: step 1/1. In terms of biological role, pyridoxal kinase involved in the salvage pathway of pyridoxal 5'-phosphate (PLP). Catalyzes the phosphorylation of pyridoxal to PLP. The sequence is that of Pyridoxal kinase PdxY from Burkholderia thailandensis (strain ATCC 700388 / DSM 13276 / CCUG 48851 / CIP 106301 / E264).